We begin with the raw amino-acid sequence, 269 residues long: Cytochrome c oxidase subunit 3 (269 aa).

Residues 1 to 22 (MTHLERSRHQQHPFHMVMPSPW) are Mitochondrial matrix-facing. Residues 23 to 41 (PIVVSFALLSLALSTALTM) form a helical membrane-spanning segment. Residues 42–48 (HGYIGNM) are Mitochondrial intermembrane-facing. A helical membrane pass occupies residues 49–73 (NMVYLALFVLLTSSILWFRDIVAEA). Residues 74-80 (TYLGDHT) lie on the Mitochondrial matrix side of the membrane. The chain crosses the membrane as a helical span at residues 81–114 (MAVRKGINLGFLMFVLSEVLIFAGLFWAYFHSAM). Residues 115–137 (SPDVTLGACWPPVGIEAVQPTEL) are Mitochondrial intermembrane-facing. A helical transmembrane segment spans residues 138 to 161 (PLLNTIILLSSGATVTYSHHALIA). Residues 162 to 164 (GNR) are Mitochondrial matrix-facing. Residues 165-188 (NKALSGLLITFWLIVIFVTCQYIE) form a helical membrane-spanning segment. Residues 189-201 (YTNAAFTISDGVY) lie on the Mitochondrial intermembrane side of the membrane. Residues 202-230 (GSVFYAGTGLHFLHMVMLAAMLGVNYWRM) form a helical membrane-spanning segment. At 231 to 248 (RNYHLTAGHHVGYETTII) the chain is on the mitochondrial matrix side. The helical transmembrane segment at 249–265 (YTHVLDVIWLFLYVVFY) threads the bilayer. The Mitochondrial intermembrane segment spans residues 266–269 (WWGV).

It belongs to the cytochrome c oxidase subunit 3 family. Component of the cytochrome c oxidase (complex IV, CIV), a multisubunit enzyme composed of 12 subunits. The complex is composed of a catalytic core of 3 subunits COX1, COX2 and COX3, encoded in the mitochondrial DNA, and 9 supernumerary subunits COX4, COX5A (or COX5B), COX6, COX7, COX8, COX9, COX12, COX13 and COX26, which are encoded in the nuclear genome. The complex exists as a monomer or a dimer and forms supercomplexes (SCs) in the inner mitochondrial membrane with a dimer of ubiquinol-cytochrome c oxidoreductase (cytochrome b-c1 complex, complex III, CIII), resulting in 2 different assemblies (supercomplexes III(2)IV and III(2)IV(2)). The N-terminus is blocked.

It is found in the mitochondrion inner membrane. It carries out the reaction 4 Fe(II)-[cytochrome c] + O2 + 8 H(+)(in) = 4 Fe(III)-[cytochrome c] + 2 H2O + 4 H(+)(out). Functionally, component of the cytochrome c oxidase, the last enzyme in the mitochondrial electron transport chain which drives oxidative phosphorylation. The respiratory chain contains 3 multisubunit complexes succinate dehydrogenase (complex II, CII), ubiquinol-cytochrome c oxidoreductase (cytochrome b-c1 complex, complex III, CIII) and cytochrome c oxidase (complex IV, CIV), that cooperate to transfer electrons derived from NADH and succinate to molecular oxygen, creating an electrochemical gradient over the inner membrane that drives transmembrane transport and the ATP synthase. Cytochrome c oxidase is the component of the respiratory chain that catalyzes the reduction of oxygen to water. Electrons originating from reduced cytochrome c in the intermembrane space (IMS) are transferred via the dinuclear copper A center (CU(A)) of COX2 and heme A of COX1 to the active site in COX1, a binuclear center (BNC) formed by heme A3 and copper B (CU(B)). The BNC reduces molecular oxygen to 2 water molecules using 4 electrons from cytochrome c in the IMS and 4 protons from the mitochondrial matrix. COX3 is a catalytic core subunit. This chain is Cytochrome c oxidase subunit 3 (COX3), found in Saccharomyces cerevisiae (strain ATCC 204508 / S288c) (Baker's yeast).